Consider the following 319-residue polypeptide: Probable NAD(P)H-dependent D-xylose reductase xyl1 (319 aa).

Tyrosine 50 serves as the catalytic Proton donor. Position 112 (histidine 112) interacts with substrate. Residues 166–167, 215–224, and 271–281 contribute to the NAD(+) site; these read SN, SSFGPLSFLE, and KSNNPTRLSQN.

It belongs to the aldo/keto reductase family.

The catalysed reaction is xylitol + NAD(+) = D-xylose + NADH + H(+). The enzyme catalyses xylitol + NADP(+) = D-xylose + NADPH + H(+). The protein operates within carbohydrate metabolism; D-xylose degradation. In terms of biological role, catalyzes the initial reaction in the xylose utilization pathway by reducing D-xylose into xylitol. Xylose is a major component of hemicelluloses such as xylan. Most fungi utilize D-xylose via three enzymatic reactions, xylose reductase (XR), xylitol dehydrogenase (XDH), and xylulokinase, to form xylulose 5-phosphate, which enters pentose phosphate pathway. This Aspergillus oryzae (strain ATCC 42149 / RIB 40) (Yellow koji mold) protein is Probable NAD(P)H-dependent D-xylose reductase xyl1 (xyl1).